Here is a 126-residue protein sequence, read N- to C-terminus: Small ribosomal subunit protein uS11 (126 aa).

It belongs to the universal ribosomal protein uS11 family. As to quaternary structure, part of the 30S ribosomal subunit. Interacts with proteins S7 and S18. Binds to IF-3.

Located on the platform of the 30S subunit, it bridges several disparate RNA helices of the 16S rRNA. Forms part of the Shine-Dalgarno cleft in the 70S ribosome. The protein is Small ribosomal subunit protein uS11 of Desulfotalea psychrophila (strain LSv54 / DSM 12343).